The sequence spans 80 residues: MGIKRALWWMVVCVVVLQVSAQHWSHGLNPGGKRAVMQESAEEIPRSSGYLCDYVAVSPGNKPFRLKDLLTPVAGREIEE.

Positions 1-21 (MGIKRALWWMVVCVVVLQVSA) are cleaved as a signal peptide. Gln22 carries the post-translational modification Pyrrolidone carboxylic acid. Gly31 is modified (glycine amide).

It belongs to the GnRH family.

Its subcellular location is the secreted. Its function is as follows. Stimulates the secretion of gonadotropins. This Clarias gariepinus (North African catfish) protein is Progonadoliberin-1 (gnrh1).